The chain runs to 521 residues: Histone deacetylase HDAC1 (521 aa).

The histone deacetylase stretch occupies residues 7 to 319 (KRVCYYYDSD…WTYETSVALA (313 aa)). Residue His-139 is part of the active site. The segment at 376 to 521 (GVQIQAIPED…GAKGAKENNI (146 aa)) is disordered. Positions 386–395 (AINDESDDED) are enriched in acidic residues. The residue at position 391 (Ser-391) is a Phosphoserine. Positions 396–414 (KVDKDDRLPQSDKDKRIVP) are enriched in basic and acidic residues. Phosphoserine occurs at positions 419, 421, and 455. Phosphothreonine is present on Thr-457. Residues 459–470 (SEIKDEKEKGDG) are compositionally biased toward basic and acidic residues. Low complexity predominate over residues 476-502 (STASNTNSNNNSNNKSDNDAGATANAG). A compositionally biased stretch (gly residues) spans 503-513 (SGSGSGSGAGA).

This sequence belongs to the histone deacetylase family. HD type 1 subfamily. As to quaternary structure, component of a form of the Esc/E(z) complex present specifically during early embryogenesis which is composed of Caf1-55, esc, E(z), Su(z)12, Pcl and HDAC1. The Esc/E(z) complex may also associate with Pcl and HDAC1 during early embryogenesis. This complex is distinct from the PRC1 complex, which contains many other PcG proteins like Pc, Ph, Psc, Su(z)2. The 2 complexes however cooperate and interact together during the first 3 hours of development to establish PcG silencing. Interacts with the histone methyltransferase Su(var)3-9. Component of a complex that contains at least HDAC1, CoRest and Su(var)3-3/Hdm. Component of the DREAM complex at least composed of Myb, Caf1-55, mip40, mip120, mip130, E2f2, Dp, Rbf, Rbf2, lin-52, HDAC1 and l(3)mbt. Interacts with the chromatin-remodeler Mi-2. Interacts with Rrp6.

The protein resides in the nucleus. The catalysed reaction is N(6)-acetyl-L-lysyl-[histone] + H2O = L-lysyl-[histone] + acetate. Catalyzes the deacetylation of lysine residues on the N-terminal part of the core histones (H2A, H2B, H3 and H4). Histone deacetylation may constitute a tag for epigenetic repression and plays an important role in transcriptional regulation, cell cycle progression and developmental events. For instance, deacetylation of histone H3 may be a prerequisite for the subsequent recruitment of the histone methyltransferase Su(var)3-9 to histones. Involved in position-effect variegation (PEV). In the larval brain, part of a regulatory network including the transcriptional repressors klu, dpn and E(spl)mgamma-HLH which is required for type II neuroblast self-renewal and for maintaining erm in an inactive state in intermediate neural progenitors (INP). This chain is Histone deacetylase HDAC1, found in Drosophila melanogaster (Fruit fly).